The following is a 416-amino-acid chain: MEQSEDGDLDAGDELFEEVDGDGKGEIFANRELLNIDHVPDENRIVGRDEHITELANEIGPAVTGSPPNSVILYGKTGSGKSLVANHVMERARREAQRRDRRLATVTVDCAQSRGEADTVQTIADKINRSTSGVTVPTRGISTNEYYNRLWQILGTEYDAALITLDEVDRLSDDDILMILSRAREAGKVDVPIGIISISNKVNFREQMTERVKSSLGHNEMIFDPYDGEQLRQILENRKDAFQEDILMPGVIPKTAALAAQRHGDARKAIRLLRHAGDYAKTNNIGTVKESHLELAQEQAEVERLKELISGLPPHSKYVLYALANLTDGTTNSNDWFRTTVIYDVYEEVCKTEATDTLTTDTIRGLLNELAFLEITESNQEHGGMGKGTYKEHRLLWDPNVVFKMNPGSAQVDTDR.

ATP-binding positions include 79 to 83 (SGKSL), Y226, and R238.

It belongs to the CDC6/cdc18 family.

Involved in regulation of DNA replication. This is ORC1-type DNA replication protein 9 (cdc6i) from Haloarcula marismortui (strain ATCC 43049 / DSM 3752 / JCM 8966 / VKM B-1809) (Halobacterium marismortui).